The following is a 155-amino-acid chain: Ribosomal RNA large subunit methyltransferase H (155 aa).

S-adenosyl-L-methionine-binding positions include L73, G104, and 123–128 (LSPLTL).

The protein belongs to the RNA methyltransferase RlmH family. As to quaternary structure, homodimer.

Its subcellular location is the cytoplasm. The catalysed reaction is pseudouridine(1915) in 23S rRNA + S-adenosyl-L-methionine = N(3)-methylpseudouridine(1915) in 23S rRNA + S-adenosyl-L-homocysteine + H(+). Its function is as follows. Specifically methylates the pseudouridine at position 1915 (m3Psi1915) in 23S rRNA. In Stutzerimonas stutzeri (strain A1501) (Pseudomonas stutzeri), this protein is Ribosomal RNA large subunit methyltransferase H.